We begin with the raw amino-acid sequence, 1180 residues long: DNA-directed RNA polymerase subunit beta (1180 aa).

The protein belongs to the RNA polymerase beta chain family. As to quaternary structure, the RNAP catalytic core consists of 2 alpha, 1 beta, 1 beta' and 1 omega subunit. When a sigma factor is associated with the core the holoenzyme is formed, which can initiate transcription.

It catalyses the reaction RNA(n) + a ribonucleoside 5'-triphosphate = RNA(n+1) + diphosphate. DNA-dependent RNA polymerase catalyzes the transcription of DNA into RNA using the four ribonucleoside triphosphates as substrates. The chain is DNA-directed RNA polymerase subunit beta from Macrococcus caseolyticus (strain JCSC5402) (Macrococcoides caseolyticum).